Here is a 121-residue protein sequence, read N- to C-terminus: UPF0344 protein BCE_1257 (121 aa).

4 helical membrane passes run 6-26 (ITAW…YSAG), 38-58 (LMYI…VKTA), 65-85 (WYGL…MVLV), and 92-112 (PTGA…YLGL).

It belongs to the UPF0344 family.

Its subcellular location is the cell membrane. In Bacillus cereus (strain ATCC 10987 / NRS 248), this protein is UPF0344 protein BCE_1257.